The chain runs to 55 residues: uncharacterized protein (55 aa).

Positions 1–22 (MPALKSHVRPNSAAPARRQPWP) are disordered.

This is an uncharacterized protein from Rhodobacter capsulatus (Rhodopseudomonas capsulata).